We begin with the raw amino-acid sequence, 393 residues long: Venom metalloproteinase BumaMPs1 (393 aa).

A signal peptide spans 1-15 (MFVHLLVLLFAAVEA). The N-linked (GlcNAc...) asparagine glycan is linked to Asn158. The 211-residue stretch at 167–377 (KCVKIEYVFV…RVEELITRRK (211 aa)) folds into the Peptidase M12B domain. His323 provides a ligand contact to Zn(2+). Glu324 is an active-site residue. 2 residues coordinate Zn(2+): His327 and His333. The segment at 378–393 (INHCIVETCDGKRKRN) is disintegrin-like domain.

This sequence belongs to the venom metalloproteinase (M12B) family. The cofactor is Zn(2+). Post-translationally, contains several disulfide bonds. In terms of tissue distribution, expressed by the venom gland.

It localises to the secreted. Functionally, metalloprotease. The sequence is that of Venom metalloproteinase BumaMPs1 from Olivierus martensii (Manchurian scorpion).